A 69-amino-acid chain; its full sequence is Small, acid-soluble spore protein I (69 aa).

The protein belongs to the SspI family.

It is found in the spore core. The protein is Small, acid-soluble spore protein I of Bacillus mycoides (strain KBAB4) (Bacillus weihenstephanensis).